We begin with the raw amino-acid sequence, 1414 residues long: Calcium-transporting ATPase 2 (1414 aa).

Disordered regions lie at residues 1 to 231 (MSRN…PSRL) and 265 to 294 (AVGTDEGNAENGAPRSSADMPGGNGPQWRA). Residues 1–327 (MSRNNPPPVI…LLMWLAFKDK (327 aa)) lie on the Cytoplasmic side of the membrane. Composition is skewed to low complexity over residues 33–53 (PTPTLVIPGSPASESSHPESP) and 75–96 (SPTPSYSSALTPPSPTLTSSSS). Over residues 179 to 189 (DGDRGEDDANK) the composition is skewed to basic and acidic residues. The segment covering 190–201 (KGKKDKKGKKGK) has biased composition (basic residues). Residues 202–229 (KDKEEPPSAHLDPDKDKTDPTPFREKPS) are compositionally biased toward basic and acidic residues. The helical transmembrane segment at 328–348 (VLILLSVAAVVSLALGLYQDL) threads the bilayer. Over 349 to 370 (GTPPKIIYNDECPDGCEEAQVD) the chain is Vacuolar. The helical transmembrane segment at 371 to 391 (WVEGVAIVVAIIIVVLVGSIN) threads the bilayer. Topologically, residues 392 to 541 (DWQKERQFKK…TPLQIKLNHL (150 aa)) are cytoplasmic. Residues 542 to 562 (AELIAKLGGASGLLLFIALMI) traverse the membrane as a helical segment. The Vacuolar portion of the chain corresponds to 563–585 (RFFVQLKTNPDRSANDKAQSFIQ). The chain crosses the membrane as a helical span at residues 586-606 (ILIIAVTLVVVAVPEGLPLAV). Residues Val-595 and Glu-600 each contribute to the Ca(2+) site. The Cytoplasmic portion of the chain corresponds to 607-1040 (TLALAFATKR…GRCVNDSVKK (434 aa)). The 4-aspartylphosphate intermediate role is filled by Asp-642. Positions 642 and 644 each coordinate Mg(2+). ATP contacts are provided by residues Thr-644, Glu-737, Arg-779, 909-911 (TGD), Arg-958, and Lys-964. Asp-983 contributes to the Mg(2+) binding site. Asn-986 lines the ATP pocket. Residues 1041–1061 (FLQFQISVNITAVFITFISAV) form a helical membrane-spanning segment. Asn-1049 is a Ca(2+) binding site. At 1062–1068 (ASSSEES) the chain is on the vacuolar side. The chain crosses the membrane as a helical span at residues 1069-1089 (VLTAVQLLWVNLIMDTFAALA). Residues Asn-1079 and Asp-1083 each contribute to the Ca(2+) site. Topologically, residues 1090–1118 (LATDPATESSLDRKPDRKNAPLITVEMFK) are cytoplasmic. Residues 1119–1139 (MIMVQAIYQIIVCLVLHFAGL) form a helical membrane-spanning segment. Residues 1140–1153 (KILGLEDNDQNNTE) lie on the Vacuolar side of the membrane. The helical transmembrane segment at 1154-1171 (LGALVFNCFVFCQIFNQL) threads the bilayer. Over 1172–1191 (NCRRLDRKLNVLEGFWRNWY) the chain is Cytoplasmic. Residues 1192-1212 (FIIIFLIMVGGQILIVEVGGA) form a helical membrane-spanning segment. Glu-1208 provides a ligand contact to Ca(2+). Topologically, residues 1213 to 1223 (AFQVTRLGGRD) are vacuolar. A helical membrane pass occupies residues 1224-1244 (WGITLVIGALSLPIGALVRLT). Residues 1245 to 1414 (PTGPFARLLV…GLSSGDANNV (170 aa)) are Cytoplasmic-facing. A disordered region spans residues 1376–1414 (PRTNPDDPLYAKFGLQPPESRGSSVSGAEGLSSGDANNV).

Belongs to the cation transport ATPase (P-type) (TC 3.A.3) family.

The protein resides in the vacuole membrane. It carries out the reaction Ca(2+)(in) + ATP + H2O = Ca(2+)(out) + ADP + phosphate + H(+). In terms of biological role, this magnesium-dependent enzyme catalyzes the hydrolysis of ATP coupled with the transport of calcium. Transports calcium to the vacuole and participates in the control of cytosolic free calcium. This is Calcium-transporting ATPase 2 from Cryptococcus neoformans var. grubii serotype A (strain H99 / ATCC 208821 / CBS 10515 / FGSC 9487) (Filobasidiella neoformans var. grubii).